A 368-amino-acid chain; its full sequence is Phosphate acyltransferase (368 aa).

The segment at 337–368 (LGDGEHDAGGAGQASPAAGHHAEPSAAQSSKA) is disordered.

This sequence belongs to the PlsX family. In terms of assembly, homodimer. Probably interacts with PlsY.

The protein localises to the cytoplasm. The enzyme catalyses a fatty acyl-[ACP] + phosphate = an acyl phosphate + holo-[ACP]. Its pathway is lipid metabolism; phospholipid metabolism. In terms of biological role, catalyzes the reversible formation of acyl-phosphate (acyl-PO(4)) from acyl-[acyl-carrier-protein] (acyl-ACP). This enzyme utilizes acyl-ACP as fatty acyl donor, but not acyl-CoA. The polypeptide is Phosphate acyltransferase (Burkholderia orbicola (strain MC0-3)).